Here is a 448-residue protein sequence, read N- to C-terminus: uncharacterized protein (448 aa).

Residues 428 to 440 (PFKTDCDPNNDND) show a composition bias toward polar residues. A disordered region spans residues 428 to 448 (PFKTDCDPNNDNDLTPPAVFG).

This is an uncharacterized protein from Mycoplasma pneumoniae (strain ATCC 29342 / M129 / Subtype 1) (Mycoplasmoides pneumoniae).